The following is a 109-amino-acid chain: Toxin YpjF (109 aa).

This sequence belongs to the CbtA/YkfI/YpjF toxin family. Interacts with FtsZ but not MreB. Another group finds interaction with FtsZ and MreB.

Toxic component of a type IV toxin-antitoxin (TA) system. Acts as a dual toxin inhibitor that blocks cell division and cell elongation in genetically separable interactions with FtsZ and MreB. Overexpression results in inhibition of growth in liquid cultures. Overexpression leads to formation of lemon-shaped cells; inactivated by overexpression of cognate antitoxin YfjZ but not when the 2 genes are coexpressed from the same plasmid. Also neutralized by overexpression of non-cognate antitoxins YafW and CbeA. The protein is Toxin YpjF (ypjF) of Escherichia coli (strain K12).